A 312-amino-acid polypeptide reads, in one-letter code: uncharacterized protein (312 aa).

Belongs to the asfivirus CP312R family.

It is found in the virion. This is an uncharacterized protein from African swine fever virus (isolate Warthog/Namibia/Wart80/1980) (ASFV).